The following is a 209-amino-acid chain: Redox-sensing transcriptional repressor Rex (209 aa).

A DNA-binding region (H-T-H motif) is located at residues 16-55; that stretch reads LYYRFIQNLSLSGKQRVSSAELSEAVKVDSATIRRDFSYF. 90–95 provides a ligand contact to NAD(+); sequence GVGNLG.

It belongs to the transcriptional regulatory Rex family. In terms of assembly, homodimer.

The protein resides in the cytoplasm. Functionally, modulates transcription in response to changes in cellular NADH/NAD(+) redox state. In Bacillus cereus (strain G9842), this protein is Redox-sensing transcriptional repressor Rex.